Here is a 171-residue protein sequence, read N- to C-terminus: Auxin-responsive protein IAA33 (171 aa).

Composition is skewed to polar residues over residues Met1–Ser11 and Asp19–Pro32. The disordered stretch occupies residues Met1–Ala51. Over residues Lys40–Ser49 the composition is skewed to low complexity. The PB1 domain occupies Val72–Gly162.

It belongs to the Aux/IAA family. As to quaternary structure, homodimers and heterodimers.

The protein resides in the nucleus. Aux/IAA proteins are short-lived transcriptional factors that function as repressors of early auxin response genes at low auxin concentrations. Repression is thought to result from the interaction with auxin response factors (ARFs), proteins that bind to the auxin-responsive promoter element (AuxRE). Formation of heterodimers with ARF proteins may alter their ability to modulate early auxin response genes expression. The polypeptide is Auxin-responsive protein IAA33 (IAA33) (Arabidopsis thaliana (Mouse-ear cress)).